The sequence spans 302 residues: MTSQGDTTSGTQLKPPVEAVRSHYDKSNEFFKLWLDPSMTYSCAYFERPDMTLEEAQYAKRKLALDKLNLEPGMTLLDIGCGWGSTMRHAVAEYDVNVIGLTLSENQYAHDKAMFDEVDSPRRKEVRIQGWEEFDEPVDRIVSLGAFEHFADGAGDAGFERYDTFFKKFYNLTPDDGRMLLHTITIPDKEEAQELGLTSPMSLLRFIKFILTEIFPGGRLPRISQVDYYSSNAGWKVERYHRIGANYVPTLNAWADALQAHKDEAIALKGQETYDIYMHYLRGCSDLFRDKYTDVCQFTLVK.

S-adenosyl-L-methionine contacts are provided by residues 41 to 42 (YS), 76 to 84 (LLDIGCGWG), 102 to 107 (TLSENQ), and 131 to 132 (WE). C284 is an active-site residue.

The protein belongs to the CFA/CMAS family. Homodimer.

The protein resides in the cytoplasm. It catalyses the reaction a 1-acyl-2-(9Z)-enoyl-sn-glycero-3-phospholipid + S-adenosyl-L-methionine = a 1-acyl-2-(9-cyclopronane)-acyl-sn-glycero-3-phospholipid + S-adenosyl-L-homocysteine + H(+). The protein operates within lipid metabolism; mycolic acid biosynthesis. Its function is as follows. Catalyzes the formation of trans cyclopropanated ketomycolate or methoxymycolate through the conversion of a double bond to a cyclopropane ring at the proximal position of an oxygenated mycolic acid via the transfer of a methylene group from S-adenosyl-L-methionine. In the absence of MmaA2, CmaA2 has a non-specific cis-cyclopropanating activity and is able to catalyze the conversion of a double bond to a cis cyclopropane ring at the distal position of an alpha mycolic acid. Cyclopropanated mycolic acids are key factors participating in cell envelope permeability, host immunomodulation and persistence. The sequence is that of Cyclopropane mycolic acid synthase 2 (cmaA2) from Mycobacterium bovis (strain ATCC BAA-935 / AF2122/97).